A 1457-amino-acid chain; its full sequence is DNA-directed RNA polymerase III subunit RPC1 (1457 aa).

Residues Cys67, Cys70, Cys77, His80, Cys107, Cys110, and Cys154 each contribute to the Zn(2+) site. Asp508, Asp510, and Asp512 together coordinate Mg(2+). The interval 854–866 is bridging helix; sequence PPEFLFHSISGRE.

It belongs to the RNA polymerase beta' chain family. As to quaternary structure, component of the RNA polymerase III (Pol III) complex consisting of 17 subunits.

It localises to the nucleus. The catalysed reaction is RNA(n) + a ribonucleoside 5'-triphosphate = RNA(n+1) + diphosphate. Functionally, DNA-dependent RNA polymerase catalyzes the transcription of DNA into RNA using the four ribonucleoside triphosphates as substrates. Largest and catalytic core component of RNA polymerase III which synthesizes small RNAs, such as 5S rRNA and tRNAs. Forms the polymerase active center together with the second largest subunit. A single-stranded DNA template strand of the promoter is positioned within the central active site cleft of Pol III. A bridging helix emanates from RPC1 and crosses the cleft near the catalytic site and is thought to promote translocation of Pol III by acting as a ratchet that moves the RNA-DNA hybrid through the active site by switching from straight to bent conformations at each step of nucleotide addition. This chain is DNA-directed RNA polymerase III subunit RPC1 (RPC1), found in Debaryomyces hansenii (strain ATCC 36239 / CBS 767 / BCRC 21394 / JCM 1990 / NBRC 0083 / IGC 2968) (Yeast).